Here is a 469-residue protein sequence, read N- to C-terminus: MSTESEISVRIRGIYSTALTKLLLDKGFKIVQPSDIIAERLGLEKSYEDFDIDIYDRNHGITVVGTKVEEIRKVLEEELIDVFFRKLPYKLYGVYKGIVVKRDDRYVYVDIGNAIGTVLIEELPDATEGDEVIVQVKKHNVLPHLSVLITIPGDYAVLIPKPIGVQRHVKISRKIRDPEERERLRILGLSVNLGEWGILWRTAAAYKEWSVLRDEIVRLSKVADKLKEAEKYSAPAEIIEGRNIYEIEFGGGAKKKLDEIRNKVVPTIEGHHQYKSYDPEFTLAVEVAEGILAKMPSQRQKISEGFIEAIVNSKGPKLGWMFTLNHVKPDGQVIKIGPGEVIEVSVKPLKVKIRRNLKPGRVYDGLEVPIEPGDYAITEIEAGKWWFVHRYYDRNGNLKGEFYNINTPVEIYPDKARYIDLEVDIVKWPDGKKEIIDKEKLKEHYEDGIISEKLYKSVLRIVQEIYEKV.

Belongs to the FAU-1 family.

Functionally, probable RNase involved in rRNA stability through maturation and/or degradation of precursor rRNAs. Binds to RNA in loop regions with AU-rich sequences. The sequence is that of Probable ribonuclease FAU-1 from Pyrococcus horikoshii (strain ATCC 700860 / DSM 12428 / JCM 9974 / NBRC 100139 / OT-3).